Reading from the N-terminus, the 302-residue chain is tRNA dimethylallyltransferase (302 aa).

7–14 (GPTASGKS) lines the ATP pocket. A substrate-binding site is contributed by 9 to 14 (TASGKS). Interaction with substrate tRNA regions lie at residues 32-35 (DSMQ) and 156-160 (QRILR).

This sequence belongs to the IPP transferase family. As to quaternary structure, monomer. Mg(2+) is required as a cofactor.

It carries out the reaction adenosine(37) in tRNA + dimethylallyl diphosphate = N(6)-dimethylallyladenosine(37) in tRNA + diphosphate. In terms of biological role, catalyzes the transfer of a dimethylallyl group onto the adenine at position 37 in tRNAs that read codons beginning with uridine, leading to the formation of N6-(dimethylallyl)adenosine (i(6)A). This is tRNA dimethylallyltransferase from Beijerinckia indica subsp. indica (strain ATCC 9039 / DSM 1715 / NCIMB 8712).